A 162-amino-acid chain; its full sequence is NADH-quinone oxidoreductase subunit I (162 aa).

4Fe-4S ferredoxin-type domains follow at residues arginine 54–glutamate 83 and threonine 93–isoleucine 122. 8 residues coordinate [4Fe-4S] cluster: cysteine 63, cysteine 66, cysteine 69, cysteine 73, cysteine 102, cysteine 105, cysteine 108, and cysteine 112.

It belongs to the complex I 23 kDa subunit family. In terms of assembly, NDH-1 is composed of 14 different subunits. Subunits NuoA, H, J, K, L, M, N constitute the membrane sector of the complex. [4Fe-4S] cluster serves as cofactor.

It is found in the cell inner membrane. The catalysed reaction is a quinone + NADH + 5 H(+)(in) = a quinol + NAD(+) + 4 H(+)(out). NDH-1 shuttles electrons from NADH, via FMN and iron-sulfur (Fe-S) centers, to quinones in the respiratory chain. The immediate electron acceptor for the enzyme in this species is believed to be ubiquinone. Couples the redox reaction to proton translocation (for every two electrons transferred, four hydrogen ions are translocated across the cytoplasmic membrane), and thus conserves the redox energy in a proton gradient. This is NADH-quinone oxidoreductase subunit I from Burkholderia vietnamiensis (strain G4 / LMG 22486) (Burkholderia cepacia (strain R1808)).